Consider the following 320-residue polypeptide: Methenyltetrahydromethanopterin cyclohydrolase (320 aa).

This sequence belongs to the MCH family.

It localises to the cytoplasm. The enzyme catalyses 5,10-methenyl-5,6,7,8-tetrahydromethanopterin + H2O = N(5)-formyl-5,6,7,8-tetrahydromethanopterin + H(+). Catalyzes the hydrolysis of methenyl-H(4)MPT(+) to 5-formyl-H(4)MPT. In Methanococcoides burtonii (strain DSM 6242 / NBRC 107633 / OCM 468 / ACE-M), this protein is Methenyltetrahydromethanopterin cyclohydrolase.